The chain runs to 234 residues: UPF0758 protein Smal_0281 (234 aa).

Residues 103 to 225 form the MPN domain; the sequence is VGNNPAAVGR…PVSFAERGLL (123 aa). H174, H176, and D187 together coordinate Zn(2+). Positions 174–187 match the JAMM motif motif; the sequence is HNHPSGDPEPSSAD.

Belongs to the UPF0758 family.

The sequence is that of UPF0758 protein Smal_0281 from Stenotrophomonas maltophilia (strain R551-3).